The chain runs to 105 residues: Ferredoxin-2 (105 aa).

A 2Fe-2S ferredoxin-type domain is found at 4–94 (YQVEVIYQGQ…DLKIETHKED (91 aa)). Positions 40, 45, 48, and 78 each coordinate [2Fe-2S] cluster.

Belongs to the 2Fe2S plant-type ferredoxin family. In terms of assembly, forms a complex with heterodimeric ferredoxin-thioredoxin reductase (FTR) and thioredoxin. The cofactor is [2Fe-2S] cluster.

Ferredoxins are iron-sulfur proteins that transfer electrons in a wide variety of metabolic reactions. This is Ferredoxin-2 (petF2) from Synechococcus sp. (strain ATCC 27144 / PCC 6301 / SAUG 1402/1) (Anacystis nidulans).